A 339-amino-acid polypeptide reads, in one-letter code: MKLVDRFRGAVTGMPRRLMVGAVGAALLSGLVGFVGGSATASAFSRPGLPVEYLQVPSAAMGRNIKIQFQSGGANSPALYLLDGMRAQDDYNGWDINTPAFEWYNQSGISVVMPVGGQSSFYSDWYNPACGKAGCTTYKWETFLTSELPAYLASNKQVKPTGSAAVGLSMAGSSALILAAYHPDQFVYAGSLSALLDPSQAMGPSLIGLAMGDAGGYKASDMWGPRGPAWQRNDPSLQVGKLVANNSRLWIYCGDGKPSDLGGNNLPAKFLEGFVRTSNLKFQEAYNGAGGHNAVFNFDANGTHDWPYWGAPVQAMKGDLQSTLGATPGAGPATAAASA.

The first 43 residues, 1–43, serve as a signal peptide directing secretion; that stretch reads MKLVDRFRGAVTGMPRRLMVGAVGAALLSGLVGFVGGSATASA. 85-86 serves as a coordination point for substrate; it reads MR. Residues 101–111 form a fibronectin-binding region; the sequence is FEWYNQSGISV. C130 and C135 form a disulfide bridge. Positions 169 and 197 each coordinate substrate. S169 acts as the Nucleophile in catalysis. E272 is an active-site residue. Substrate contacts are provided by residues 274-277, K281, and 304-306; these read FVRT and HDW. H304 is an active-site residue.

This sequence belongs to the mycobacterial A85 antigen family. Homodimer.

It localises to the secreted. The protein resides in the cell wall. It is found in the cytoplasm. It carries out the reaction an acyl-CoA + a 1,2-diacyl-sn-glycerol = a triacyl-sn-glycerol + CoA. The enzyme catalyses 2 alpha,alpha'-trehalose 6-mycolate = alpha,alpha'-trehalose 6,6'-bismycolate + alpha,alpha-trehalose. The antigen 85 proteins (FbpA, FbpB, FbpC) are responsible for the high affinity of mycobacteria for fibronectin, a large adhesive glycoprotein, which facilitates the attachment of M.tuberculosis to murine alveolar macrophages (AMs). They also help to maintain the integrity of the cell wall by catalyzing the transfer of mycolic acids to cell wall arabinogalactan, and through the synthesis of alpha,alpha-trehalose dimycolate (TDM, cord factor). They catalyze the transfer of a mycoloyl residue from one molecule of alpha,alpha-trehalose monomycolate (TMM) to another TMM, leading to the formation of TDM. FbpA mediates triacylglycerol (TAG) formation with long-chain acyl-CoA as the acyl donor and 1,2-dipalmitoyl-sn-glycerol (1,2-dipalmitin) as the acyl acceptor. It has a preference for C26:0-CoA over C18:1-CoA. This chain is Diacylglycerol acyltransferase/mycolyltransferase Ag85A (fbpA), found in Mycobacterium gordonae.